Reading from the N-terminus, the 434-residue chain is Tryptamine hydroxycinnamoyltransferase 2 (434 aa).

Residues histidine 154 and aspartate 380 each act as proton acceptor in the active site.

It belongs to the plant acyltransferase family.

In terms of biological role, hydroxycinnamoyl transferase that catalyzes the transfer of an acyl from p-coumaryol-CoA to tryptamine, to produce coumaroyl tryptamine. Serotonin and tyramine serve as acyl acceptors in vitro. Can use caffeoyl-CoA, and to a lesser extent feruloyl-CoA, as acyl donors. This chain is Tryptamine hydroxycinnamoyltransferase 2, found in Oryza sativa subsp. japonica (Rice).